We begin with the raw amino-acid sequence, 447 residues long: NADH-quinone oxidoreductase subunit N (447 aa).

13 helical membrane passes run Phe4–Ala24, Leu27–Ala47, Leu68–Gly88, Glu92–His112, Ala113–Leu133, Phe146–Ala166, Ala181–Val201, Pro215–Val235, Val245–Ala265, Val280–Ala300, Leu302–Ile322, Gly342–Phe362, and Ala376–Leu395.

This sequence belongs to the complex I subunit 2 family. As to quaternary structure, NDH-1 is composed of 14 different subunits. Subunits NuoA, H, J, K, L, M, N constitute the membrane sector of the complex.

It localises to the cell inner membrane. The catalysed reaction is a quinone + NADH + 5 H(+)(in) = a quinol + NAD(+) + 4 H(+)(out). Functionally, NDH-1 shuttles electrons from NADH, via FMN and iron-sulfur (Fe-S) centers, to quinones in the respiratory chain. The immediate electron acceptor for the enzyme in this species is believed to be ubiquinone. Couples the redox reaction to proton translocation (for every two electrons transferred, four hydrogen ions are translocated across the cytoplasmic membrane), and thus conserves the redox energy in a proton gradient. The sequence is that of NADH-quinone oxidoreductase subunit N from Cereibacter sphaeroides (strain ATCC 17025 / ATH 2.4.3) (Rhodobacter sphaeroides).